We begin with the raw amino-acid sequence, 644 residues long: (E2-independent) E3 ubiquitin-conjugating enzyme FATS (644 aa).

Residues 1–67 (MISPVVISRL…LGILTPSDDQ (67 aa)) form a required for interaction with p53/TP53 region. 4 disordered regions span residues 62 to 83 (TPSD…LGKG), 305 to 349 (LGSG…SSHT), 367 to 413 (VLSG…SILS), and 475 to 507 (NEDP…EDSY). Residues 67–175 (QGLETEPLST…RLSARQDYWV (109 aa)) form a required for interaction with HDAC1 region. Low complexity predominate over residues 398-410 (EGDSSPSSDGQPS). Positions 481 to 492 (TPEPSPATPSPS) are enriched in pro residues. Positions 516 to 644 (TLQEALEVHR…LDQLLQRNAV (129 aa)) are ALMS motif. A coiled-coil region spans residues 598 to 629 (KRIYNNLPEVKKKKEEQKKRMILQSNRLRAEV).

In terms of assembly, interacts with HDAC1; the interaction prevents binding of HDAC1 to CDKN1A/p21 and facilitates the acetylation and stabilization of CDKN1A/p21. Interacts with p53/TP53; the interaction inhibits binding of p53/TP53 and MDM2. As to expression, highly expressed in testis. Weak expression found in brain, lung, heart, ovary, thymus, spleen and kidney.

The protein resides in the cytoplasm. The protein localises to the cytoskeleton. It localises to the microtubule organizing center. It is found in the centrosome. Tumor suppressor that is required to sustain G2/M checkpoint after DNA damage. Acts as a p53/TP53 activator by inhibiting MDM2 binding to p53/TP53 and stimulating non-proteolytic polyubiquitination of p53/TP53. Exhibits ubiquitin ligase (E3) activity and assemble ubiquitin polymers through 'Lys-11'- (K11-), 'Lys-29'- (K29-) and 'Lys-63'- (K63)-linkages, independently of the ubiquitin-conjugating enzyme (E2). Promotes p53/TP53-dependent transcription of CDKN1A/p21, leading to robust checkpoint response. Mediates CDKN1A/p21 protein stability in a ubiquitin-independent manner. Interacts with HDAC1 and prevents binding of HDAC1 to CDKN1A/p21 and facilitates the acetylation and stabilization of CDKN1A/p21. May have a role in the assembly of primary cilia. The protein is (E2-independent) E3 ubiquitin-conjugating enzyme FATS of Mus musculus (Mouse).